Reading from the N-terminus, the 253-residue chain is 5-oxoprolinase subunit A (253 aa).

It belongs to the LamB/PxpA family. In terms of assembly, forms a complex composed of PxpA, PxpB and PxpC.

It catalyses the reaction 5-oxo-L-proline + ATP + 2 H2O = L-glutamate + ADP + phosphate + H(+). Its function is as follows. Catalyzes the cleavage of 5-oxoproline to form L-glutamate coupled to the hydrolysis of ATP to ADP and inorganic phosphate. In Bacillus cereus (strain AH187), this protein is 5-oxoprolinase subunit A.